The chain runs to 262 residues: Putative hydro-lyase RHA1_ro03475 (262 aa).

It belongs to the D-glutamate cyclase family.

This chain is Putative hydro-lyase RHA1_ro03475, found in Rhodococcus jostii (strain RHA1).